A 452-amino-acid chain; its full sequence is MQRRIMGIETEFGVTCTFHGHRRLSPDEVARYLFRRVVSWGRSSNVFLRNGARLYLDVGSHPEYATAECDSLVQLVTHDRAGERVLEDLLVDAEQRLSDEGIGGDIYLFKNNTDSAGNSYGCHENYLIVRAGEFSRISDVLLPFLVTRQLICGAGKVLQTPKAATYCLSQRAEHIWEGVSSATTRSRPIINTRDEPHADAEKYRRLHVIVGDSNMAETTTMLKVGTAALVLEMIESGVAFRDFSLDNPIRAIREVSHDLTGRRPVRLAGGRQASALDIQREYHARAVEHLNTREPNEQVEQVVELWGRTLDAVESQDFSKVDTEIDWVIKRKLFQRYQDRYNMELSDPKIAQLDLAYHDIKRGRGVFDLLQRKGLAARVTTDEEIKAAVDQPPQTTRAKLRGDFITAAQEAGRDFTVDWVHLKLNDQAQRTVLCKDPFRSVDERVERLIASM.

Glutamate 9 serves as a coordination point for Mg(2+). Arginine 53 contacts ATP. Tyrosine 55 is a binding site for Mg(2+). The active-site Proton acceptor is aspartate 57. Residue glutamate 63 coordinates Mg(2+). Residues threonine 66 and tryptophan 419 each coordinate ATP.

This sequence belongs to the Pup ligase/Pup deamidase family. Pup-conjugating enzyme subfamily.

The enzyme catalyses ATP + [prokaryotic ubiquitin-like protein]-L-glutamate + [protein]-L-lysine = ADP + phosphate + N(6)-([prokaryotic ubiquitin-like protein]-gamma-L-glutamyl)-[protein]-L-lysine.. It functions in the pathway protein degradation; proteasomal Pup-dependent pathway. Its pathway is protein modification; protein pupylation. Its function is as follows. Catalyzes the covalent attachment of the prokaryotic ubiquitin-like protein modifier Pup to the proteasomal substrate proteins, thereby targeting them for proteasomal degradation. This tagging system is termed pupylation. The ligation reaction involves the side-chain carboxylate of the C-terminal glutamate of Pup and the side-chain amino group of a substrate lysine. In Mycobacteroides abscessus (strain ATCC 19977 / DSM 44196 / CCUG 20993 / CIP 104536 / JCM 13569 / NCTC 13031 / TMC 1543 / L948) (Mycobacterium abscessus), this protein is Pup--protein ligase.